A 40-amino-acid polypeptide reads, in one-letter code: Unknown protein from spot 207 of 2D-PAGE of etiolated coleoptile (40 aa).

It belongs to the GST superfamily. HSP26 family.

This is Unknown protein from spot 207 of 2D-PAGE of etiolated coleoptile from Zea mays (Maize).